A 205-amino-acid polypeptide reads, in one-letter code: CASP-like protein 0U1 (205 aa).

Topologically, residues 1 to 66 (MSGGDIDPTA…GYHKFAVFQF (66 aa)) are cytoplasmic. The region spanning 10 to 162 (AINSPKFRLI…SMMFTWKEWR (153 aa)) is the MARVEL domain. The helical transmembrane segment at 67–87 (LVVICVTYWLFTMLWMGMYLI) threads the bilayer. Residues 88–90 (QKV) are Extracellular-facing. Residues 91 to 111 (PPAGTEFMIYAVFNVLILIAF) form a helical membrane-spanning segment. Residues 112-137 (STSWTECNETIVDPTYPVCKRATGAK) lie on the Cytoplasmic side of the membrane. A helical membrane pass occupies residues 138-158 (ASIAFAMFTWLALCVSMMFTW). At 159 to 167 (KEWRDQNYE) the chain is on the extracellular side. The chain crosses the membrane as a helical span at residues 168–188 (GLPIFGDFSSFMPGGGGGGMG). The Cytoplasmic portion of the chain corresponds to 189–205 (GGGGYERPSDVNTQTYA).

The protein belongs to the Casparian strip membrane proteins (CASP) family. In terms of assembly, homodimer and heterodimers.

It localises to the cell membrane. The protein is CASP-like protein 0U1 of Micromonas pusilla (strain CCMP1545) (Picoplanktonic green alga).